A 381-amino-acid polypeptide reads, in one-letter code: Subtilisin amylosacchariticus (381 aa).

Positions 1 to 29 (MRSKKLWISLLFALTLIFTMAFSNMSAQA) are cleaved as a signal peptide. A propeptide spanning residues 30–106 (AGKSSTEKKY…VEEDHIAHEY (77 aa)) is cleaved from the precursor. Positions 38–103 (KYIVGFKQTM…VAYVEEDHIA (66 aa)) constitute an Inhibitor I9 domain. A Ca(2+)-binding site is contributed by glutamine 108. The Peptidase S8 domain occupies 111 to 380 (PYGISQIKAP…KGLINVQAAA (270 aa)). Residue aspartate 138 is the Charge relay system of the active site. Aspartate 147 is a Ca(2+) binding site. Histidine 170 (charge relay system) is an active-site residue. Leucine 181, asparagine 183, isoleucine 185, valine 187, alanine 275, tyrosine 277, and threonine 280 together coordinate Ca(2+). Serine 327 functions as the Charge relay system in the catalytic mechanism.

This sequence belongs to the peptidase S8 family. The cofactor is Ca(2+).

Its subcellular location is the secreted. The catalysed reaction is Hydrolysis of proteins with broad specificity for peptide bonds, and a preference for a large uncharged residue in P1. Hydrolyzes peptide amides.. Its function is as follows. Subtilisin is an extracellular alkaline serine protease, it catalyzes the hydrolysis of proteins and peptide amides. This Bacillus subtilis subsp. amylosacchariticus protein is Subtilisin amylosacchariticus (apr).